Reading from the N-terminus, the 216-residue chain is L-fuculose phosphate aldolase (216 aa).

Residues 28 to 29 (GN), 43 to 44 (TG), and 71 to 72 (SS) each bind substrate. Glu-73 functions as the Proton donor/acceptor in the catalytic mechanism. Zn(2+) is bound by residues Glu-73, His-92, His-94, and His-155.

This sequence belongs to the aldolase class II family. AraD/FucA subfamily. As to quaternary structure, homotetramer. Requires Zn(2+) as cofactor.

The enzyme catalyses L-fuculose 1-phosphate = (S)-lactaldehyde + dihydroxyacetone phosphate. It functions in the pathway carbohydrate degradation; L-fucose degradation; L-lactaldehyde and glycerone phosphate from L-fucose: step 3/3. Its function is as follows. Involved in the degradation of L-fucose and D-arabinose. Catalyzes the reversible cleavage of L-fuculose 1-phosphate (Fuc1P) to yield dihydroxyacetone phosphate (DHAP) and L-lactaldehyde. The sequence is that of L-fuculose phosphate aldolase from Haemophilus influenzae (strain ATCC 51907 / DSM 11121 / KW20 / Rd).